A 448-amino-acid polypeptide reads, in one-letter code: UDP-N-acetylmuramoylalanine--D-glutamate ligase (448 aa).

Residue Gly112–Thr118 coordinates ATP.

It belongs to the MurCDEF family.

It is found in the cytoplasm. It catalyses the reaction UDP-N-acetyl-alpha-D-muramoyl-L-alanine + D-glutamate + ATP = UDP-N-acetyl-alpha-D-muramoyl-L-alanyl-D-glutamate + ADP + phosphate + H(+). The protein operates within cell wall biogenesis; peptidoglycan biosynthesis. In terms of biological role, cell wall formation. Catalyzes the addition of glutamate to the nucleotide precursor UDP-N-acetylmuramoyl-L-alanine (UMA). In Acinetobacter baumannii (strain ATCC 17978 / DSM 105126 / CIP 53.77 / LMG 1025 / NCDC KC755 / 5377), this protein is UDP-N-acetylmuramoylalanine--D-glutamate ligase.